A 168-amino-acid chain; its full sequence is Protein GrpE (168 aa).

This sequence belongs to the GrpE family. As to quaternary structure, homodimer.

The protein resides in the cytoplasm. In terms of biological role, participates actively in the response to hyperosmotic and heat shock by preventing the aggregation of stress-denatured proteins, in association with DnaK and GrpE. It is the nucleotide exchange factor for DnaK and may function as a thermosensor. Unfolded proteins bind initially to DnaJ; upon interaction with the DnaJ-bound protein, DnaK hydrolyzes its bound ATP, resulting in the formation of a stable complex. GrpE releases ADP from DnaK; ATP binding to DnaK triggers the release of the substrate protein, thus completing the reaction cycle. Several rounds of ATP-dependent interactions between DnaJ, DnaK and GrpE are required for fully efficient folding. The polypeptide is Protein GrpE (Thermotoga neapolitana (strain ATCC 49049 / DSM 4359 / NBRC 107923 / NS-E)).